Reading from the N-terminus, the 369-residue chain is 3-isopropylmalate dehydrogenase (369 aa).

76 to 89 (GPKWDRNPSHLRPE) serves as a coordination point for NAD(+). Arginine 96, arginine 106, arginine 134, and aspartate 223 together coordinate substrate. Positions 223, 247, and 251 each coordinate Mg(2+). 281 to 293 (GSAPDIAGQNKAN) is a binding site for NAD(+).

This sequence belongs to the isocitrate and isopropylmalate dehydrogenases family. LeuB type 1 subfamily. As to quaternary structure, homodimer. It depends on Mg(2+) as a cofactor. The cofactor is Mn(2+).

The protein localises to the cytoplasm. It catalyses the reaction (2R,3S)-3-isopropylmalate + NAD(+) = 4-methyl-2-oxopentanoate + CO2 + NADH. It functions in the pathway amino-acid biosynthesis; L-leucine biosynthesis; L-leucine from 3-methyl-2-oxobutanoate: step 3/4. Catalyzes the oxidation of 3-carboxy-2-hydroxy-4-methylpentanoate (3-isopropylmalate) to 3-carboxy-4-methyl-2-oxopentanoate. The product decarboxylates to 4-methyl-2 oxopentanoate. In Priestia megaterium (strain DSM 319 / IMG 1521) (Bacillus megaterium), this protein is 3-isopropylmalate dehydrogenase (leuB).